The primary structure comprises 350 residues: MRYLTAGESHGEALIAIIEGLPSNLFIDAEFINKELERRQKGYGRGGRMAIEKDEIHIISGVRDGKTTGAPLAMEIKNRDYKNWKDKKVPPVTRPRPGHADLPGSIKYNQRDIRNILERASARETAARVAVGSVAKLLLKELNISLKSRVLEIGGAKREEKWKRLIEKAKKEGDTLGGIIEIVIEGVPVGLGSHAQWDRKLDALLAYHVMSVQGIKGVEFGLGFEAARLPGSLVHDDIYYKENEGFYRKTNNAGGIEGGMSNGNPIVIRAAMKPIPTLLRPLDSVDIATKEETKAIYERSDVTAVEAAACVLEAVCAWVIADECLKKFGGDSVEELKRNYDTYLAYVRSF.

Positions 39 and 45 each coordinate NADP(+). Residues 85 to 104 form a disordered region; it reads KDKKVPPVTRPRPGHADLPG. FMN contacts are provided by residues 119–121, 213–214, glycine 258, 273–277, and arginine 299; these read RAS, QG, and KPIPT.

Belongs to the chorismate synthase family. In terms of assembly, homotetramer. The cofactor is FMNH2.

It catalyses the reaction 5-O-(1-carboxyvinyl)-3-phosphoshikimate = chorismate + phosphate. The protein operates within metabolic intermediate biosynthesis; chorismate biosynthesis; chorismate from D-erythrose 4-phosphate and phosphoenolpyruvate: step 7/7. Functionally, catalyzes the anti-1,4-elimination of the C-3 phosphate and the C-6 proR hydrogen from 5-enolpyruvylshikimate-3-phosphate (EPSP) to yield chorismate, which is the branch point compound that serves as the starting substrate for the three terminal pathways of aromatic amino acid biosynthesis. This reaction introduces a second double bond into the aromatic ring system. The chain is Chorismate synthase from Caldanaerobacter subterraneus subsp. tengcongensis (strain DSM 15242 / JCM 11007 / NBRC 100824 / MB4) (Thermoanaerobacter tengcongensis).